A 474-amino-acid chain; its full sequence is MVQLSRKATCNSHGQVSSYFLGWEEYEKNPYDVTKNPQGIIQMGLAENQLCFDLLESWLAQNTDAACFKRDGQSVFRELALFQDYHGLSSFKNAFADFMSENRGNRVSFDSNNLVLTAGATSANETLMFCLADPGDAFLLPTPYYPGFDRDLKWRTGVEIVPIQSSSTNGFRITKLALEEAYEQAKKLDLNVKGILITNPSNPLGTTTTQTELNILFDFITKNKNIHLVSDEIYSGTVFNSSEFISVMEILKNNQLENTDVLNRVHIVCSLSKDLGLPGFRVGAIYSNDKDVISAATKMSSFGLVSSQTQYLLSSLLSDKKFTKNYLRENQKRLKNRQRKLVLGLEAIGIKCLKSNAGLFCWVDMRPLLRSKTFEAEMDLWKKIVYEVKLNISPGSSCHCEEPGWFRVCFANMIDETLKLALKRLKMLVDDENSSRRCQKSKSERLNGSRKKTMSNVSNWVFRLSFHDREAEER.

Glutamate 47 and tyrosine 85 together coordinate substrate. At lysine 273 the chain carries N6-(pyridoxal phosphate)lysine.

This sequence belongs to the class-I pyridoxal-phosphate-dependent aminotransferase family. Homodimer and heterodimer. In vivo, the relevance of heterodimerization with other ACS enzymes is however unsure. Interacts with XBAT32. Interacts (via its C-terminal region) with ETO1 and EOL1. Pyridoxal 5'-phosphate serves as cofactor. In terms of processing, ubiquitinated by XBAT32. Ubiquitination probably leads to its subsequent degradation, thus controlling ethylene production. As to expression, expressed in roots, leaves and flowers.

The catalysed reaction is S-adenosyl-L-methionine = 1-aminocyclopropane-1-carboxylate + S-methyl-5'-thioadenosine + H(+). The protein operates within alkene biosynthesis; ethylene biosynthesis via S-adenosyl-L-methionine; ethylene from S-adenosyl-L-methionine: step 1/2. 1-aminocyclopropane-1-carboxylate synthase (ACS) enzymes catalyze the conversion of S-adenosyl-L-methionine (SAM) into 1-aminocyclopropane-1-carboxylate (ACC), a direct precursor of ethylene. This is 1-aminocyclopropane-1-carboxylate synthase 4 (ACS4) from Arabidopsis thaliana (Mouse-ear cress).